Here is a 219-residue protein sequence, read N- to C-terminus: Cytochrome c biogenesis ATP-binding export protein CcmA (219 aa).

In terms of domain architecture, ABC transporter spans 10–218 (ISAVNLTCIR…TLDYSYDSAV (209 aa)). Position 42–49 (42–49 (GPNGSGKT)) interacts with ATP.

Belongs to the ABC transporter superfamily. CcmA exporter (TC 3.A.1.107) family. In terms of assembly, the complex is composed of two ATP-binding proteins (CcmA) and two transmembrane proteins (CcmB).

It localises to the cell inner membrane. The catalysed reaction is heme b(in) + ATP + H2O = heme b(out) + ADP + phosphate + H(+). Functionally, part of the ABC transporter complex CcmAB involved in the biogenesis of c-type cytochromes; once thought to export heme, this seems not to be the case, but its exact role is uncertain. Responsible for energy coupling to the transport system. The protein is Cytochrome c biogenesis ATP-binding export protein CcmA of Colwellia psychrerythraea (strain 34H / ATCC BAA-681) (Vibrio psychroerythus).